We begin with the raw amino-acid sequence, 877 residues long: Dynamin (877 aa).

In terms of domain architecture, Dynamin-type G spans Gln-23–Pro-289. The G1 motif stretch occupies residues Gly-33–Ser-40. Gly-33–Ser-41 lines the GTP pocket. Residues Val-59–Arg-61 are G2 motif. The interval Asp-131–Gly-134 is G3 motif. Residues Thr-200–Asp-203 are G4 motif. GTP contacts are provided by residues Thr-200–Asp-206 and Asn-231–Gln-234. The G5 motif stretch occupies residues Val-230–Ser-233. Residues Gln-513 to Val-621 enclose the PH domain. 2 disordered regions span residues Pro-623 to Arg-648 and Thr-740 to Val-834. Positions Glu-630–Ser-641 are enriched in acidic residues. The GED domain maps to Val-650–Val-741. Phosphoserine occurs at positions 756, 764, and 767. The segment covering Pro-788–Leu-826 has biased composition (pro residues).

This sequence belongs to the TRAFAC class dynamin-like GTPase superfamily. Dynamin/Fzo/YdjA family.

It localises to the cytoplasm. It is found in the cytoskeleton. The catalysed reaction is GTP + H2O = GDP + phosphate + H(+). In terms of biological role, microtubule-associated force-producing protein which is involved in the production of microtubule bundles and which is able to bind and hydrolyze GTP. Implicated in endocytic protein sorting. This is Dynamin (shi) from Drosophila melanogaster (Fruit fly).